The following is a 95-amino-acid chain: MALKPLQDRVLVRRVESEEKTAGGLIIPESAKEKPSEGEVVSCGDGARKDSGELIEMTVKTGDRILFGKWSGTEVTLDGEELLMMKESDILGIIT.

It belongs to the GroES chaperonin family. In terms of assembly, heptamer of 7 subunits arranged in a ring. Interacts with the chaperonin GroEL.

It localises to the cytoplasm. Its function is as follows. Together with the chaperonin GroEL, plays an essential role in assisting protein folding. The GroEL-GroES system forms a nano-cage that allows encapsulation of the non-native substrate proteins and provides a physical environment optimized to promote and accelerate protein folding. GroES binds to the apical surface of the GroEL ring, thereby capping the opening of the GroEL channel. This is Co-chaperonin GroES from Jannaschia sp. (strain CCS1).